A 319-amino-acid chain; its full sequence is Phospho-N-acetylmuramoyl-pentapeptide-transferase (319 aa).

A run of 10 helical transmembrane segments spans residues 5 to 25, 51 to 71, 79 to 99, 116 to 136, 149 to 169, 172 to 192, 197 to 217, 224 to 244, 252 to 272, and 299 to 319; these read LIPF…FIGF, TMGG…VLIW, TWIL…DDGI, LGQI…HFAF, SFLF…AVNL, GLDG…AWIA, NWVI…FFIF, IFMG…VSIF, LLIG…VISF, and VDIV…IIWG.

Belongs to the glycosyltransferase 4 family. MraY subfamily. Mg(2+) is required as a cofactor.

The protein localises to the cell membrane. It carries out the reaction UDP-N-acetyl-alpha-D-muramoyl-L-alanyl-gamma-D-glutamyl-L-lysyl-D-alanyl-D-alanine + di-trans,octa-cis-undecaprenyl phosphate = Mur2Ac(oyl-L-Ala-gamma-D-Glu-L-Lys-D-Ala-D-Ala)-di-trans,octa-cis-undecaprenyl diphosphate + UMP. It participates in cell wall biogenesis; peptidoglycan biosynthesis. Functionally, catalyzes the initial step of the lipid cycle reactions in the biosynthesis of the cell wall peptidoglycan: transfers peptidoglycan precursor phospho-MurNAc-pentapeptide from UDP-MurNAc-pentapeptide onto the lipid carrier undecaprenyl phosphate, yielding undecaprenyl-pyrophosphoryl-MurNAc-pentapeptide, known as lipid I. The polypeptide is Phospho-N-acetylmuramoyl-pentapeptide-transferase (Lactobacillus gasseri (strain ATCC 33323 / DSM 20243 / BCRC 14619 / CIP 102991 / JCM 1131 / KCTC 3163 / NCIMB 11718 / NCTC 13722 / AM63)).